A 356-amino-acid polypeptide reads, in one-letter code: Photosynthetic reaction center cytochrome c subunit (356 aa).

Residues 1–20 (MKQLIVNSVATVALASLVAG) form the signal peptide. Cysteine 21 is lipidated: S-diacylglycerol cysteine. Heme is bound by residues methionine 94, cysteine 107, cysteine 110, histidine 111, methionine 130, histidine 144, cysteine 152, cysteine 155, histidine 156, methionine 253, cysteine 264, cysteine 267, histidine 268, cysteine 325, cysteine 328, and histidine 329.

Component of the photosynthetic reaction center composed of protein subunits L (PufL), M (PufM), H (PuhA) and cytochrome C (PufC). In terms of processing, binds 4 heme groups per subunit. Post-translationally, after the signal sequence is removed, the N-terminal cysteine is modified to form a diacylglyceride thioether, but the alpha-amino group is free and is not N-palmitoylated.

The protein localises to the cellular chromatophore membrane. Functionally, the reaction center of purple bacteria contains a tightly bound cytochrome molecule which re-reduces the photo oxidized primary electron donor. This chain is Photosynthetic reaction center cytochrome c subunit, found in Blastochloris viridis (Rhodopseudomonas viridis).